Consider the following 211-residue polypeptide: Thymidylate kinase (211 aa).

Residue 7 to 14 (GIDASGKS) coordinates ATP.

Belongs to the thymidylate kinase family.

It catalyses the reaction dTMP + ATP = dTDP + ADP. Phosphorylation of dTMP to form dTDP in both de novo and salvage pathways of dTTP synthesis. The sequence is that of Thymidylate kinase from Mesomycoplasma hyopneumoniae (strain 232) (Mycoplasma hyopneumoniae).